We begin with the raw amino-acid sequence, 520 residues long: BTB/POZ domain-containing protein At3g50780 (520 aa).

Positions 43 to 68 are disordered; that stretch reads SHNSLTKHKQSSPALQPPKPEKKPSS. The 70-residue stretch at 127-196 folds into the BTB domain; sequence AKVILVGKQG…MYCKDMKQRL (70 aa).

It functions in the pathway protein modification; protein ubiquitination. Its function is as follows. May act as a substrate-specific adapter of an E3 ubiquitin-protein ligase complex (CUL3-RBX1-BTB) which mediates the ubiquitination and subsequent proteasomal degradation of target proteins. This chain is BTB/POZ domain-containing protein At3g50780, found in Arabidopsis thaliana (Mouse-ear cress).